Reading from the N-terminus, the 149-residue chain is Probable flagellum biosynthesis repressor protein FlbT (149 aa).

The protein belongs to the FlbT family.

Has a post-transcriptional repressor function in flagellum biogenesis. Associates with the 5'-UTR of fljK mRNA and promotes its degradation. The protein is Probable flagellum biosynthesis repressor protein FlbT of Allorhizobium ampelinum (strain ATCC BAA-846 / DSM 112012 / S4) (Agrobacterium vitis (strain S4)).